Consider the following 272-residue polypeptide: Nuclear transcription factor Y subunit A-1 (272 aa).

Disordered stretches follow at residues 1 to 20 (MQSK…HAVQ) and 34 to 106 (SFGV…PALS). 2 stretches are compositionally biased toward polar residues: residues 46-61 (IPSN…GSES) and 82-92 (KDSQAATSSRS). Residues 175–198 (YVNAKQYEGILRRRKARAKAELER) carry the Subunit association domain (SAD) motif. A DNA-binding region (NFYA/HAP2-type) is located at residues 205-230 (KPYLHESRHKHAMRRARASGGRFAKK). Residues 206–272 (PYLHESRHKH…NETLNSSGAP (67 aa)) form a disordered region. Basic residues predominate over residues 211 to 221 (SRHKHAMRRAR). Over residues 229–247 (KKSEVEAGEDAGGRDRERG) the composition is skewed to basic and acidic residues. Composition is skewed to polar residues over residues 248-257 (SATNSSGSEQ) and 263-272 (NETLNSSGAP).

The protein belongs to the NFYA/HAP2 subunit family. In terms of assembly, heterotrimeric transcription factor composed of three components, NF-YA, NF-YB and NF-YC. NF-YB and NF-YC must interact and dimerize for NF-YA association and DNA binding. As to expression, ubiquitous.

It localises to the nucleus. Functionally, stimulates the transcription of various genes by recognizing and binding to a CCAAT motif in promoters. The polypeptide is Nuclear transcription factor Y subunit A-1 (NFYA1) (Arabidopsis thaliana (Mouse-ear cress)).